We begin with the raw amino-acid sequence, 112 residues long: DNA-binding protein Mboo_1886 (112 aa).

It belongs to the PDCD5 family.

The protein is DNA-binding protein Mboo_1886 of Methanoregula boonei (strain DSM 21154 / JCM 14090 / 6A8).